Reading from the N-terminus, the 159-residue chain is MSKKNTADNHIVTNKKVFHDYFLEEHFEAGIALEGWEVKAVRAGRIQIKESYILVKDQQVYLFGALIHPLASASSHIFPEAQRTRKLLLHRYQIAKLIGASERDGYTLMPVSLYWKNGFVKVDVAIAKGKKEFDKRQVKKDQDWKKTQSRIMKAHKRQL.

This sequence belongs to the SmpB family.

The protein localises to the cytoplasm. Functionally, required for rescue of stalled ribosomes mediated by trans-translation. Binds to transfer-messenger RNA (tmRNA), required for stable association of tmRNA with ribosomes. tmRNA and SmpB together mimic tRNA shape, replacing the anticodon stem-loop with SmpB. tmRNA is encoded by the ssrA gene; the 2 termini fold to resemble tRNA(Ala) and it encodes a 'tag peptide', a short internal open reading frame. During trans-translation Ala-aminoacylated tmRNA acts like a tRNA, entering the A-site of stalled ribosomes, displacing the stalled mRNA. The ribosome then switches to translate the ORF on the tmRNA; the nascent peptide is terminated with the 'tag peptide' encoded by the tmRNA and targeted for degradation. The ribosome is freed to recommence translation, which seems to be the essential function of trans-translation. This chain is SsrA-binding protein, found in Dichelobacter nodosus (strain VCS1703A).